Consider the following 648-residue polypeptide: Solute carrier family 23 member 2 (648 aa).

Residues 1–21 form a disordered region; the sequence is MMGIGKNTASKSVEAGGSTEG. Topologically, residues 9–110 are cytoplasmic; sequence ASKSVEAGGS…LCIFLGLQHY (102 aa). Residue Ser70 is modified to Phosphoserine. Position 75 is a phosphothreonine (Thr75). Ser78 carries the phosphoserine modification. Thr79 carries the post-translational modification Phosphothreonine. The residue at position 81 (Ser81) is a Phosphoserine. Residues 111-131 traverse the membrane as a helical segment; sequence LTCFSGTIAVPFLLADAMCVG. Residues 132–139 lie on the Extracellular side of the membrane; it reads DDQWATSQ. A helical membrane pass occupies residues 140–160; it reads LIGTIFFCVGITTLLQTTFGC. Arg161 is a topological domain (cytoplasmic). A helical membrane pass occupies residues 162 to 182; sequence LPLFQASAFAFLAPARAILSL. At 183 to 216 the chain is on the extracellular side; that stretch reads DKWKCNTTEITVANGTAELLEHIWHPRIQEIQGA. N-linked (GlcNAc...) asparagine glycans are attached at residues Asn188 and Asn196. A helical transmembrane segment spans residues 217–237; it reads IIMSSLIEVVIGLLGLPGALL. Residues 238–264 lie on the Cytoplasmic side of the membrane; the sequence is RYIGPLTITPTVALIGLSGFQAAGERA. Residues 265 to 282 form a helical membrane-spanning segment; it reads GKHWGIAMLTIFLVLLFS. Topologically, residues 283-286 are extracellular; that stretch reads QYAR. Residues 287-300 constitute an intramembrane region (helical); it reads NVKFPLPIYKSKKG. Topologically, residues 301–307 are extracellular; it reads WTAYKFQ. A helical membrane pass occupies residues 308 to 328; sequence LFKMFPIILAILVSWLLCFIF. Residues 329–369 are Cytoplasmic-facing; the sequence is TVTDVFPSNSTDYGYYARTDARKGVLLVAPWFKVPYPFQWG. The chain crosses the membrane as a helical span at residues 370 to 390; sequence MPTVSAAGVIGMLSAVVASII. Topologically, residues 391-415 are extracellular; sequence ESIGDYYACARLSCAPPPPIHAINR. A helical transmembrane segment spans residues 416–436; sequence GIFVEGLSCVLDGIFGTGNGS. At 437-459 the chain is on the cytoplasmic side; the sequence is TSSSPNIGVLGITKVGSRRVIQY. The helical transmembrane segment at 460–480 threads the bilayer; sequence GAALMLGLGMVGKFSALFASL. Residues 481-483 are Extracellular-facing; it reads PDP. The helical transmembrane segment at 484–504 threads the bilayer; it reads VLGALFCTLFGMITAVGLSNL. Residues 505–514 lie on the Cytoplasmic side of the membrane; sequence QFIDLNSSRN. A helical membrane pass occupies residues 515–535; it reads LFVLGFSIFFGLVLPSYLRQN. At 536–545 the chain is on the extracellular side; sequence PLVTGITGID. Residues 546–566 form a helical membrane-spanning segment; it reads QILNVLLTTAMFVGGCVAFIL. Residues 567-648 lie on the Cytoplasmic side of the membrane; it reads DNTIPGTPEE…SSDKDSQATV (82 aa). Thr647 is modified (phosphothreonine).

This sequence belongs to the nucleobase:cation symporter-2 (NCS2) (TC 2.A.40) family. In terms of assembly, interacts with CLSTN3. In terms of processing, phosphorylated. In terms of tissue distribution, expressed in metabolically active and specialized tissues, including high expression in brain and adrenals. Detected in a wide range of tissues. Expression in kidney is almost undetectable.

The protein localises to the cell membrane. It carries out the reaction L-ascorbate(out) + 2 Na(+)(out) = L-ascorbate(in) + 2 Na(+)(in). Its function is as follows. Sodium/ascorbate cotransporter. Mediates electrogenic uptake of vitamin C, with a stoichiometry of 2 Na(+) for each ascorbate. The protein is Solute carrier family 23 member 2 (Slc23a2) of Mus musculus (Mouse).